A 417-amino-acid chain; its full sequence is NADH-quinone oxidoreductase subunit D (417 aa).

Belongs to the complex I 49 kDa subunit family. In terms of assembly, NDH-1 is composed of 14 different subunits. Subunits NuoB, C, D, E, F, and G constitute the peripheral sector of the complex.

Its subcellular location is the cell inner membrane. The catalysed reaction is a quinone + NADH + 5 H(+)(in) = a quinol + NAD(+) + 4 H(+)(out). Its function is as follows. NDH-1 shuttles electrons from NADH, via FMN and iron-sulfur (Fe-S) centers, to quinones in the respiratory chain. The immediate electron acceptor for the enzyme in this species is believed to be ubiquinone. Couples the redox reaction to proton translocation (for every two electrons transferred, four hydrogen ions are translocated across the cytoplasmic membrane), and thus conserves the redox energy in a proton gradient. This is NADH-quinone oxidoreductase subunit D from Francisella tularensis subsp. holarctica (strain FTNF002-00 / FTA).